A 518-amino-acid polypeptide reads, in one-letter code: Apolipoprotein N-acyltransferase (518 aa).

A run of 6 helical transmembrane segments spans residues 22 to 42 (LAFI…LWII), 63 to 83 (FFHW…WVHV), 101 to 121 (ALLA…LAWF), 134 to 154 (LLFP…LTGF), 174 to 194 (IIGA…LALC), and 202 to 222 (LLIL…LSQI). One can recognise a CN hydrolase domain in the interval 234–484 (VQGNIPQSMK…TGVLSATIPL (251 aa)). Glutamate 273 functions as the Proton acceptor in the catalytic mechanism. The active site involves lysine 343. The Nucleophile role is filled by cysteine 395. Residues 492-512 (AKIGQTPLLILCGALLLVGFI) form a helical membrane-spanning segment.

The protein belongs to the CN hydrolase family. Apolipoprotein N-acyltransferase subfamily.

The protein resides in the cell inner membrane. It carries out the reaction N-terminal S-1,2-diacyl-sn-glyceryl-L-cysteinyl-[lipoprotein] + a glycerophospholipid = N-acyl-S-1,2-diacyl-sn-glyceryl-L-cysteinyl-[lipoprotein] + a 2-acyl-sn-glycero-3-phospholipid + H(+). It functions in the pathway protein modification; lipoprotein biosynthesis (N-acyl transfer). In terms of biological role, catalyzes the phospholipid dependent N-acylation of the N-terminal cysteine of apolipoprotein, the last step in lipoprotein maturation. The sequence is that of Apolipoprotein N-acyltransferase from Shewanella oneidensis (strain ATCC 700550 / JCM 31522 / CIP 106686 / LMG 19005 / NCIMB 14063 / MR-1).